Reading from the N-terminus, the 168-residue chain is GTP-dependent dephospho-CoA kinase (168 aa).

Aspartate 49, valine 50, valine 51, aspartate 68, lysine 70, and glutamate 120 together coordinate GTP.

Belongs to the GTP-dependent DPCK family.

It carries out the reaction 3'-dephospho-CoA + GTP = GDP + CoA + H(+). Its pathway is cofactor biosynthesis; coenzyme A biosynthesis. In terms of biological role, catalyzes the GTP-dependent phosphorylation of the 3'-hydroxyl group of dephosphocoenzyme A to form coenzyme A (CoA). The polypeptide is GTP-dependent dephospho-CoA kinase (Pyrobaculum neutrophilum (strain DSM 2338 / JCM 9278 / NBRC 100436 / V24Sta) (Thermoproteus neutrophilus)).